Reading from the N-terminus, the 464-residue chain is Desmin (464 aa).

Serine 2 carries the post-translational modification Blocked amino end (Ser). Residues 2-100 (SQSYSSSQRV…QEFLQTRTNE (99 aa)) form a head region. Serine 7 and serine 23 each carry phosphoserine; by CDK1. At threonine 65 the chain carries Phosphothreonine; by CDK1. Positions 100-408 (EKVELQELND…KLLEGEENRI (309 aa)) constitute an IF rod domain. A coil 1A region spans residues 101–133 (KVELQELNDRFANYIEKVRFLEQQNALMVAEVN). The interval 134–143 (RLRGKEPTRV) is linker 1. The tract at residues 144-244 (AEMYEEELRE…HEEEIRELQA (101 aa)) is coil 1B. The linker 12 stretch occupies residues 245–260 (QLQEQHIQVEMDISKP). Residues 261–279 (DLTAALRDIRAQYESIAAK) form a coil 2A region. The linker 2 stretch occupies residues 280 to 287 (NIAEAEEW). The segment at 288 to 404 (YKSKVSDLTQ…ATYRKLLEGE (117 aa)) is coil 2B. A tail region spans residues 405–464 (ENRISIPMHQTFASALNFRETSPDQRGSEVHTKKTVMIKTIETRDGEVVSEATQQQHEVL).

This sequence belongs to the intermediate filament family. Homomer.

It is found in the cytoplasm. Its subcellular location is the myofibril. The protein localises to the sarcomere. It localises to the z line. The protein resides in the cell membrane. It is found in the sarcolemma. Muscle-specific type III intermediate filament essential for proper muscular structure and function. Plays a crucial role in maintaining the structure of sarcomeres, inter-connecting the Z-disks and forming the myofibrils, linking them not only to the sarcolemmal cytoskeleton, but also to the nucleus and mitochondria, thus providing strength for the muscle fiber during activity. In adult striated muscle they form a fibrous network connecting myofibrils to each other and to the plasma membrane from the periphery of the Z-line structures. In Gallus gallus (Chicken), this protein is Desmin (DES).